A 1943-amino-acid chain; its full sequence is Protocadherin-15 (1943 aa).

An N-terminal signal peptide occupies residues 1 to 26; it reads MFLQFAVWKCLPHGILIASLLVVSWG. Residues 27-1381 are Extracellular-facing; sequence QYDDDWQYED…GESLGYTEGA (1355 aa). Cys-37 and Cys-125 are disulfide-bonded. 11 Cadherin domains span residues 45 to 152, 153 to 270, 283 to 400, 401 to 514, 515 to 621, 622 to 722, 724 to 824, 825 to 931, 932 to 1040, 1042 to 1149, and 1150 to 1264; these read PATI…SPTF, KHES…GPMF, RPLT…SPYF, TMPS…TPTF, PEIS…PPRF, PQLM…APVF, PYLP…SPVF, TNST…PPVF, SKRI…IPRF, QEEY…PPVF, and QKKF…PPTL. 3 N-linked (GlcNAc...) asparagine glycosylation sites follow: Asn-57, Asn-102, and Asn-206. N-linked (GlcNAc...) asparagine glycosylation is found at Asn-424, Asn-564, Asn-667, Asn-729, Asn-773, Asn-826, and Asn-856. 3 N-linked (GlcNAc...) asparagine glycosylation sites follow: Asn-1069, Asn-1089, and Asn-1180. A helical membrane pass occupies residues 1382–1402; that stretch reads LLALAFIIILCCIPAILVVLV. Over 1403–1943 the chain is Cytoplasmic; sequence SYRQFKVRQA…VQPHSQSTSL (541 aa). Disordered stretches follow at residues 1425 to 1453, 1475 to 1533, and 1714 to 1865; these read PAAKPAAPVPAAPAPPPPPPPPPPGAHLY, GNNS…STHN, and ILNS…EPHR. The span at 1431-1449 shows a compositional bias: pro residues; the sequence is APVPAAPAPPPPPPPPPPG. Basic and acidic residues-rich tracts occupy residues 1480 to 1489 and 1498 to 1509; these read PEDRSSHRDG and ESHEPAHVEGPL. Pro residues-rich tracts occupy residues 1742 to 1760 and 1769 to 1779; these read PHPPSISAPLPHPPLPRPP and PLSPPNPPPPQ. Positions 1784-1795 are enriched in low complexity; that stretch reads SLPISTPPTSSL. Positions 1796-1821 are enriched in pro residues; that stretch reads PLPPPLSLPPPPRPPAPRLFPQPPST. Over residues 1822-1834 the composition is skewed to low complexity; that stretch reads SIPSTDSISAPAA. The segment covering 1846–1858 has biased composition (polar residues); it reads TTSTTQPPASNPQ.

In terms of assembly, antiparallel heterodimer with CDH23. Found in a complex with TMIE and LHFPL5. Interacts with LHFPL5/TMHS; this interaction is required for efficient localization to hair bundles. Interacts with MYO7A. Interacts with USH1G; this interaction may recruit USH1G to the plasma membrane. Interacts with TOMT. Isoforms CD1 and CD3 interact with TMC1 (via N-terminus) and TMC2 (via N-terminus). Interacts with PIEZO1. As to expression, expressed in brain and sensory epithelium of the developing inner ear. Expressed in the retina, in the photoreceptor inner segments, the outer plexiform layer, the inner nuclei layer and the ganglion cell layer and, more diffusely in the inner plexiform layer (at protein level). Not detected in the retinal pigment epithelium (at protein level). Expressed in the spleen, dorsal root ganglion, dorsal aspect of neural tube, floor plate and ependymal cells adjacent to the neural canal.

It localises to the cell membrane. The protein localises to the secreted. Calcium-dependent cell-adhesion protein. Required for inner ear neuroepithelial cell elaboration and cochlear function. Probably involved in the maintenance of normal retinal function. This chain is Protocadherin-15 (Pcdh15), found in Mus musculus (Mouse).